Reading from the N-terminus, the 349-residue chain is Ferredoxin--NADP reductase 1 (349 aa).

FAD-binding residues include Glu-36, Lys-44, Tyr-48, Ile-88, Leu-123, Asp-290, and Ser-331.

The protein belongs to the ferredoxin--NADP reductase type 2 family. As to quaternary structure, homodimer. It depends on FAD as a cofactor.

The catalysed reaction is 2 reduced [2Fe-2S]-[ferredoxin] + NADP(+) + H(+) = 2 oxidized [2Fe-2S]-[ferredoxin] + NADPH. This Bacillus mycoides (strain KBAB4) (Bacillus weihenstephanensis) protein is Ferredoxin--NADP reductase 1.